We begin with the raw amino-acid sequence, 659 residues long: Macrolide export ATP-binding/permease protein MacB (659 aa).

Residues 10–249 (IELRGIRKRY…QPLLHHAGLS (240 aa)) enclose the ABC transporter domain. ATP is bound at residue 47–54 (GSSGSGKS). A run of 4 helical transmembrane segments spans residues 287–307 (SLTL…LAIG), 538–558 (LGLV…NVML), 594–614 (ITGG…LVFW), and 619–639 (VFSF…GLIF).

It belongs to the ABC transporter superfamily. Macrolide exporter (TC 3.A.1.122) family. As to quaternary structure, homodimer.

It localises to the cell inner membrane. In terms of biological role, non-canonical ABC transporter that contains transmembrane domains (TMD), which form a pore in the inner membrane, and an ATP-binding domain (NBD), which is responsible for energy generation. Confers resistance against macrolides. In Nitrosomonas europaea (strain ATCC 19718 / CIP 103999 / KCTC 2705 / NBRC 14298), this protein is Macrolide export ATP-binding/permease protein MacB.